We begin with the raw amino-acid sequence, 619 residues long: MVSGPLALRWCPWAGHRDMGPDMELPSHSKQLLLQLNQQRAKGFLCDVIIMVENSIFRAHKNVLAASSIYFKSLVLHDNLINLDTDMVSSTVFQQILDFIYTGKLLPSDQPSEPNFSTLLTAASYLQLPELAALCRRKLKRAGKPFGPGRVGTAGIGRPTRSQRLSTASVIQARFPGLVDVRKGHPAPQELPQAKGSDDELFLGTSTQESTHGLGLGGPAGGEMGLGGCSTSTNGSSGGCEQELGLDLSKKSPPLPPTTPGPHLTPEDPAQLSDSQRESPAPTSTSALPVGNSASFVELGATPEEPMDVEGAEENHLSLLEGQGGQPRKSLRHSARKKDWNKKEPVAGSPFDRRETGSKGSCPGEEGEGTGDRVPNGVLASSAGGGGPSASYGEQSFPCKEEEENGKDGSEDSGQSGSEGGSGHTGAHYVYRQEGYETVSYGDNVYVCIPCAKGFPSSEQLNAHVETHTEEELFIKEEGAYETGSGGAEEEAEDLSTPSAAYTADSRPFKCSVCEKTYKDPATLRQHEKTHWLTRPFPCNICGKMFTQRGTMTRHMRSHLGLKPFACDECGMRFTRQYRLTEHMRVHSGEKPYECQLCGGKFTQQRNLISHLRMHTSPS.

The region spanning 46 to 109 is the BTB domain; sequence CDVIIMVENS…IYTGKLLPSD (64 aa). Residues Ser-166, Ser-169, and Ser-197 each carry the phosphoserine modification. 2 disordered regions span residues 180–293 and 307–426; these read DVRK…VGNS and MDVE…GHTG. Over residues 214-228 the composition is skewed to gly residues; the sequence is LGLGGPAGGEMGLGG. Positions 247 to 249 are binding to CtBP; it reads DLS. A compositionally biased stretch (polar residues) spans 281-293; that stretch reads APTSTSALPVGNS. The span at 337–357 shows a compositional bias: basic and acidic residues; it reads KKDWNKKEPVAGSPFDRRETG. Ser-349 and Ser-416 each carry phosphoserine. 5 consecutive C2H2-type zinc fingers follow at residues 446–468, 509–531, 537–559, 565–587, and 593–615; these read YVCIPCAKGFPSSEQLNAHVETH, FKCSVCEKTYKDPATLRQHEKTH, FPCNICGKMFTQRGTMTRHMRSH, FACDECGMRFTRQYRLTEHMRVH, and YECQLCGGKFTQQRNLISHLRMH.

The protein belongs to the krueppel C2H2-type zinc-finger protein family. Hic subfamily. Self-associates. Interacts with HIC1.

Its subcellular location is the nucleus. Transcriptional repressor. The protein is Hypermethylated in cancer 2 protein (Hic2) of Mus musculus (Mouse).